Consider the following 521-residue polypeptide: Medium/long-chain-fatty-acid--[acyl-carrier-protein] ligase MbtM (521 aa).

This sequence belongs to the ATP-dependent AMP-binding enzyme family.

It carries out the reaction a long-chain fatty acid + holo-[ACP] + ATP = a long-chain fatty acyl-[ACP] + AMP + diphosphate. It catalyses the reaction a medium-chain fatty acid + holo-[ACP] + ATP = a medium-chain fatty acyl-[ACP] + AMP + diphosphate. It participates in siderophore biosynthesis; mycobactin biosynthesis. Functionally, activates lipidic moieties required for mycobactin biosynthesis. Converts medium- to long-chain aliphatic fatty acids into acyl adenylate, which is further transferred on to the phosphopantetheine arm of the carrier protein MbtL. The chain is Medium/long-chain-fatty-acid--[acyl-carrier-protein] ligase MbtM (mbtM) from Mycobacterium bovis (strain ATCC BAA-935 / AF2122/97).